A 327-amino-acid chain; its full sequence is uncharacterized protein (327 aa).

The chain crosses the membrane as a helical span at residues 13-33; it reads IICIISIIVLLLIIISLYPHK.

It is found in the membrane. This is an uncharacterized protein from Caenorhabditis elegans.